The chain runs to 418 residues: Transmembrane protease serine 11D (418 aa).

At 1–20 (MYRPARVTSTSRFLNPYVVC) the chain is on the cytoplasmic side. The helical; Signal-anchor for type II membrane protein transmembrane segment at 21-41 (FIVVAGVVILAVTIALLVYFL) threads the bilayer. Residues 42–418 (AFDQKSYFYR…LDWIRQQTGI (377 aa)) are Extracellular-facing. In terms of domain architecture, SEA spans 46–163 (KSYFYRSSFQ…STEITSLTDQ (118 aa)). Asparagine 144 carries N-linked (GlcNAc...) asparagine glycosylation. Intrachain disulfides connect cysteine 173–cysteine 292, cysteine 212–cysteine 228, cysteine 337–cysteine 353, and cysteine 364–cysteine 393. The 231-residue stretch at 187-417 (ILGGTEAEEG…YLDWIRQQTG (231 aa)) folds into the Peptidase S1 domain. Catalysis depends on charge relay system residues histidine 227 and aspartate 272. Catalysis depends on serine 368, which acts as the Charge relay system.

It belongs to the peptidase S1 family. Monomer. As to expression, located in the cells of the submucosal serous glands of the bronchi and trachea.

It localises to the cell membrane. The protein resides in the secreted. Its activity is regulated as follows. Strongly inhibited by diisopropyl fluorophosphate, leupeptin, antipain, aprotinin, and soybean trypsin inhibitor, but hardly inhibited by secretory leukocyte protease inhibitor at 10 microM. May play some biological role in the host defense system on the mucous membrane independently of or in cooperation with other substances in airway mucous or bronchial secretions. Plays a role in the proteolytic processing of ACE2. Proteolytically cleaves and activates the human coronavirus 229E (HCoV-229E) spike glycoprotein which facilitate virus-cell membrane fusions; spike proteins are synthesized and maintained in precursor intermediate folding states and proteolysis permits the refolding and energy release required to create stable virus-cell linkages and membrane coalescence. Preferentially cleaves the C-terminal side of arginine residues at the P1 position of certain peptides, cleaving Boc-Phe-Ser-Arg-4-methylcoumaryl-7-amide most efficiently and having an optimum pH of 8.6 with this substrate. The polypeptide is Transmembrane protease serine 11D (TMPRSS11D) (Homo sapiens (Human)).